The primary structure comprises 108 residues: UPF0060 membrane protein BH2744 (108 aa).

Transmembrane regions (helical) follow at residues 6-26, 31-51, 60-80, and 86-106; these read TLFLLAGLAEIGGGYLIWLWL, PVYLGLFGAVALALYGVIATF, VYAAYGGVFIFLAVLWGWWID, and TYDWIGAVICLVGVGIMLWAP.

This sequence belongs to the UPF0060 family.

The protein localises to the cell membrane. The protein is UPF0060 membrane protein BH2744 of Halalkalibacterium halodurans (strain ATCC BAA-125 / DSM 18197 / FERM 7344 / JCM 9153 / C-125) (Bacillus halodurans).